A 381-amino-acid polypeptide reads, in one-letter code: Probable tRNA sulfurtransferase (381 aa).

The THUMP domain occupies arginine 60–lysine 168. ATP is bound by residues leucine 186–leucine 187, lysine 269, glycine 291, and glutamine 300.

It belongs to the ThiI family.

The protein localises to the cytoplasm. It carries out the reaction [ThiI sulfur-carrier protein]-S-sulfanyl-L-cysteine + a uridine in tRNA + 2 reduced [2Fe-2S]-[ferredoxin] + ATP + H(+) = [ThiI sulfur-carrier protein]-L-cysteine + a 4-thiouridine in tRNA + 2 oxidized [2Fe-2S]-[ferredoxin] + AMP + diphosphate. The catalysed reaction is [ThiS sulfur-carrier protein]-C-terminal Gly-Gly-AMP + S-sulfanyl-L-cysteinyl-[cysteine desulfurase] + AH2 = [ThiS sulfur-carrier protein]-C-terminal-Gly-aminoethanethioate + L-cysteinyl-[cysteine desulfurase] + A + AMP + 2 H(+). Its pathway is cofactor biosynthesis; thiamine diphosphate biosynthesis. Its function is as follows. Catalyzes the ATP-dependent transfer of a sulfur to tRNA to produce 4-thiouridine in position 8 of tRNAs, which functions as a near-UV photosensor. Also catalyzes the transfer of sulfur to the sulfur carrier protein ThiS, forming ThiS-thiocarboxylate. This is a step in the synthesis of thiazole, in the thiamine biosynthesis pathway. The sulfur is donated as persulfide by IscS. This is Probable tRNA sulfurtransferase from Thermococcus kodakarensis (strain ATCC BAA-918 / JCM 12380 / KOD1) (Pyrococcus kodakaraensis (strain KOD1)).